Reading from the N-terminus, the 345-residue chain is Platelet-derived growth factor C (345 aa).

The N-terminal stretch at 1–22 (MLLLGLLLLTSALAGRRHGAAA) is a signal peptide. The CUB domain maps to 46–163 (HEKIITVTSN…PGFCIHYTLL (118 aa)). N-linked (GlcNAc...) asparagine glycosylation is present at N55. Cystine bridges form between C104–C124, C250–C294, C280–C335, and C287–C337.

Belongs to the PDGF/VEGF growth factor family. As to quaternary structure, homodimer; disulfide-linked. Interacts with PDGFRA homodimers, and with heterodimers formed by PDGFRA and PDGFRB. Proteolytic removal of the N-terminal CUB domain releasing the core domain is necessary for unmasking the receptor-binding epitopes of the core domain. Cleavage after basic residues in the hinge region (region connecting the CUB and growth factor domains) gives rise to the receptor-binding form.

The protein resides in the secreted. Its function is as follows. Growth factor that plays an essential role in the regulation of embryonic development, cell proliferation, cell migration, survival and chemotaxis. Potent mitogen and chemoattractant for cells of mesenchymal origin. Required for normal skeleton formation during embryonic development. Required for normal skin morphogenesis during embryonic development. Plays an important role in wound healing, in angiogenesis and blood vessel development. The chain is Platelet-derived growth factor C (PDGFC) from Gallus gallus (Chicken).